We begin with the raw amino-acid sequence, 279 residues long: S-methyl-5'-thioadenosine phosphorylase (279 aa).

Phosphate is bound by residues Ser-28, 70–71 (RH), and 103–104 (SA). Met-202 is a binding site for substrate. Thr-203 contacts phosphate. A substrate-binding site is contributed by 226–228 (DYD).

This sequence belongs to the PNP/MTAP phosphorylase family. MTAP subfamily. As to quaternary structure, homohexamer. Dimer of a homotrimer.

It carries out the reaction S-methyl-5'-thioadenosine + phosphate = 5-(methylsulfanyl)-alpha-D-ribose 1-phosphate + adenine. Its pathway is amino-acid biosynthesis; L-methionine biosynthesis via salvage pathway; S-methyl-5-thio-alpha-D-ribose 1-phosphate from S-methyl-5'-thioadenosine (phosphorylase route): step 1/1. Catalyzes the reversible phosphorylation of S-methyl-5'-thioadenosine (MTA) to adenine and 5-methylthioribose-1-phosphate. Involved in the breakdown of MTA, a major by-product of polyamine biosynthesis. Responsible for the first step in the methionine salvage pathway after MTA has been generated from S-adenosylmethionine. Has broad substrate specificity with 6-aminopurine nucleosides as preferred substrates. This is S-methyl-5'-thioadenosine phosphorylase from Pyrobaculum aerophilum (strain ATCC 51768 / DSM 7523 / JCM 9630 / CIP 104966 / NBRC 100827 / IM2).